The following is a 574-amino-acid chain: MEPNSLRTKVPAFLSDLGKATLRGIRKCPRCGTYNGTRGLSCKNKTCGTIFRYGARKQPSVEAVKIITGSDLQVYSVRQRDRGPDYRCFVELGVSETTIQTVDGTIITQLSSGRCYVPSCLKAATQGVVENQCQHIKLAVNCQAEATPLTLKSSVLNAMQASPETKQTIWQLATEPTGPLVQRITKNILVVKCKASQKHSLGYLHTSFVQKISAKSLPERRFFCSCQTLKSHKSNASKDEVAQRCIHFFACICAFASDETLAQEFSDFLNFDSSGLKEIIVPQLGCHSESTVSACESTASKSKKRRKDEVSGAQRNSSPLPQDAVSSNLRKSGLKKPVVASSLKRQACGQLLDEAQVTLSFQDWLASVTERIHQTMHYQFDGKPEPLVFHIPQSFFDALQQRISIGSAKKRLPNSTTAFVRKDALPLGTFSKYTWHITNILQVKQILDTPEMPLEITRSFIQNRDGTYELFKCPKVEVESIAETYGRIEKQPVLRPLELKTFLKVGNTSPDQKEPTPFIIEWIPDILPQSKIGELRIKFEYGHHRNGHVAEYQDHRPALDQPLELAPLTTITFP.

The interval 297–327 is disordered; the sequence is STASKSKKRRKDEVSGAQRNSSPLPQDAVSS. Polar residues predominate over residues 313 to 327; it reads AQRNSSPLPQDAVSS.

This is an uncharacterized protein from Macaca fascicularis (Crab-eating macaque).